The sequence spans 140 residues: Sec-independent protein translocase protein TatB (140 aa).

The chain crosses the membrane as a helical span at residues 1–21 (MFDIGFSELLLIAVVALVVLG). Residues 119–140 (VHVTSPPPSTSTHGNNGQEKSQ) are disordered. Residues 128–140 (TSTHGNNGQEKSQ) show a composition bias toward polar residues.

The protein belongs to the TatB family. As to quaternary structure, the Tat system comprises two distinct complexes: a TatABC complex, containing multiple copies of TatA, TatB and TatC subunits, and a separate TatA complex, containing only TatA subunits. Substrates initially bind to the TatABC complex, which probably triggers association of the separate TatA complex to form the active translocon.

Its subcellular location is the cell inner membrane. Its function is as follows. Part of the twin-arginine translocation (Tat) system that transports large folded proteins containing a characteristic twin-arginine motif in their signal peptide across membranes. Together with TatC, TatB is part of a receptor directly interacting with Tat signal peptides. TatB may form an oligomeric binding site that transiently accommodates folded Tat precursor proteins before their translocation. The polypeptide is Sec-independent protein translocase protein TatB (Xylella fastidiosa (strain 9a5c)).